Reading from the N-terminus, the 213-residue chain is Ribonuclease HII (213 aa).

Residues 1–213 enclose the RNase H type-2 domain; sequence MKIIGIDEAG…SWKTAQKFIQ (213 aa). A divalent metal cation-binding residues include aspartate 7, glutamate 8, and aspartate 105.

The protein belongs to the RNase HII family. Requires Mn(2+) as cofactor. Mg(2+) is required as a cofactor.

The protein localises to the cytoplasm. It catalyses the reaction Endonucleolytic cleavage to 5'-phosphomonoester.. Its function is as follows. Endonuclease that specifically degrades the RNA of RNA-DNA hybrids. This Methanococcoides burtonii (strain DSM 6242 / NBRC 107633 / OCM 468 / ACE-M) protein is Ribonuclease HII.